The chain runs to 152 residues: Ribosome maturation factor RimP (152 aa).

It belongs to the RimP family.

It localises to the cytoplasm. Its function is as follows. Required for maturation of 30S ribosomal subunits. This Elusimicrobium minutum (strain Pei191) protein is Ribosome maturation factor RimP.